The following is a 150-amino-acid chain: UPF0178 protein Ssed_1350 (150 aa).

The protein belongs to the UPF0178 family.

The chain is UPF0178 protein Ssed_1350 from Shewanella sediminis (strain HAW-EB3).